A 109-amino-acid polypeptide reads, in one-letter code: U16-hexatoxin-Hi1a (109 aa).

A signal peptide spans 1-16 (LTGHLCCMMIWWQATQ). Positions 17–43 (VISPPLPVIREENNSHKMGVSLFPLKR) are excised as a propeptide.

Post-translationally, contains 2 disulfide bonds. As to expression, expressed by the venom gland.

It localises to the secreted. Probable ion channel inhibitor. The polypeptide is U16-hexatoxin-Hi1a (Hadronyche infensa (Fraser island funnel-web spider)).